The primary structure comprises 174 residues: Small ribosomal subunit protein uS5c (174 aa).

One can recognise an S5 DRBM domain in the interval 17 to 80; the sequence is WEERVVQVKR…TDAKKHLVTV (64 aa).

It belongs to the universal ribosomal protein uS5 family. In terms of assembly, part of the 30S ribosomal subunit. Contacts protein S4.

It is found in the plastid. The protein resides in the chloroplast. Functionally, with S4 and S12 plays an important role in translational accuracy. This chain is Small ribosomal subunit protein uS5c (rps5), found in Porphyra purpurea (Red seaweed).